Consider the following 337-residue polypeptide: Probable poly [ADP-ribose] polymerase DDB_G0278045 (337 aa).

Positions 21–231 constitute a PARP catalytic domain; it reads KKWDIIYKQR…NNNKNKNKNN (211 aa). Residues 218–242 show a composition bias toward low complexity; the sequence is NNTNNNNKNKNKNNNKNNNKNIKIQ. Residues 218–247 form a disordered region; that stretch reads NNTNNNNKNKNKNNNKNNNKNIKIQNENKN.

The enzyme catalyses L-aspartyl-[protein] + NAD(+) = 4-O-(ADP-D-ribosyl)-L-aspartyl-[protein] + nicotinamide. The catalysed reaction is L-glutamyl-[protein] + NAD(+) = 5-O-(ADP-D-ribosyl)-L-glutamyl-[protein] + nicotinamide. It carries out the reaction NAD(+) + (ADP-D-ribosyl)n-acceptor = nicotinamide + (ADP-D-ribosyl)n+1-acceptor + H(+).. This is Probable poly [ADP-ribose] polymerase DDB_G0278045 from Dictyostelium discoideum (Social amoeba).